We begin with the raw amino-acid sequence, 977 residues long: uncharacterized protein (977 aa).

The interval 100–152 is disordered; that stretch reads ATSPLQQNGKSRDTEKPPSMKEKDLSSNSSSQHDKAFHERVDQGKNKSSTTKY. 2 stretches are compositionally biased toward basic and acidic residues: residues 109–124 and 131–144; these read KSRDTEKPPSMKEKDL and QHDKAFHERVDQGK. Ser-165 is subject to Phosphoserine. 2 stretches are compositionally biased toward polar residues: residues 166–175 and 183–193; these read PGQSVNSLKP and STKSSTSSEMH. A disordered region spans residues 166–194; the sequence is PGQSVNSLKPNSGDEVPSTKSSTSSEMHT.

This is an uncharacterized protein from Schizosaccharomyces pombe (strain 972 / ATCC 24843) (Fission yeast).